Consider the following 455-residue polypeptide: Serine--tRNA ligase (455 aa).

Residue 252-254 participates in L-serine binding; that stretch reads TAE. ATP is bound by residues 283–285 and Val299; that span reads RKE. An L-serine-binding site is contributed by Glu306. 370-373 serves as a coordination point for ATP; sequence EVVS. Thr406 contacts L-serine.

The protein belongs to the class-II aminoacyl-tRNA synthetase family. Type-1 seryl-tRNA synthetase subfamily. As to quaternary structure, homodimer. The tRNA molecule binds across the dimer.

The protein localises to the cytoplasm. It catalyses the reaction tRNA(Ser) + L-serine + ATP = L-seryl-tRNA(Ser) + AMP + diphosphate + H(+). It carries out the reaction tRNA(Sec) + L-serine + ATP = L-seryl-tRNA(Sec) + AMP + diphosphate + H(+). It functions in the pathway aminoacyl-tRNA biosynthesis; selenocysteinyl-tRNA(Sec) biosynthesis; L-seryl-tRNA(Sec) from L-serine and tRNA(Sec): step 1/1. Its function is as follows. Catalyzes the attachment of serine to tRNA(Ser). Is also able to aminoacylate tRNA(Sec) with serine, to form the misacylated tRNA L-seryl-tRNA(Sec), which will be further converted into selenocysteinyl-tRNA(Sec). In Pyrococcus horikoshii (strain ATCC 700860 / DSM 12428 / JCM 9974 / NBRC 100139 / OT-3), this protein is Serine--tRNA ligase.